The following is a 505-amino-acid chain: ATP synthase subunit alpha (505 aa).

Residue 170–177 participates in ATP binding; that stretch reads GDRQTGKS.

The protein belongs to the ATPase alpha/beta chains family. As to quaternary structure, F-type ATPases have 2 components, CF(1) - the catalytic core - and CF(0) - the membrane proton channel. CF(1) has five subunits: alpha(3), beta(3), gamma(1), delta(1), epsilon(1). CF(0) has four main subunits: a(1), b(1), b'(1) and c(9-12).

It localises to the cellular thylakoid membrane. It carries out the reaction ATP + H2O + 4 H(+)(in) = ADP + phosphate + 5 H(+)(out). Produces ATP from ADP in the presence of a proton gradient across the membrane. The alpha chain is a regulatory subunit. The protein is ATP synthase subunit alpha of Prochlorococcus marinus (strain MIT 9312).